Reading from the N-terminus, the 148-residue chain is uncharacterized protein (148 aa).

Residues 1–144 (MNIKRITTEA…PHVLMTKEIS (144 aa)) form the N-acetyltransferase domain.

This is an uncharacterized protein from Bacillus subtilis (strain 168).